The sequence spans 332 residues: MSQYTVVTGAAGFIGANIVKALNERGETNIIAVDNLTKADKFKNLTDCEIADYLDKTEFLSVVEEGVLDGSVAAIFHEGACSDTMETDGRYMMDNNYRYSGALLKFCQDEGAQFLYASSASVYGSGRVFSESRECESPLNVYGYSKFLFDQSVRRLWAERTAQIAGFRYFNVYGPREQHKGRMASVAFHFFNQYRAEGRVKLFEGCDGYPNGEQRRDFVSVEDVVRVNMWFLDHPEVSGIFNVGTGRCQSFNDVAVATVNACRAAEGQDALTLDEMQAQGLIGYVAFPEALKGKYQSYTEADTAALRRAGYDGSFYSVEEGTARYIERLLQS.

Residues Phe-13–Ile-14, Asp-34–Asn-35, Lys-41, Lys-56, Glu-78–Ser-82, and Asn-95 each bind NADP(+). Residue Tyr-142 is the Proton acceptor of the active site. Lys-146 lines the NADP(+) pocket. A substrate-binding site is contributed by Asn-171. The NADP(+) site is built by Val-172 and Lys-180. The active-site Proton acceptor is the Lys-180. Residues Arg-182, His-189, Phe-203–Cys-206, Arg-216, and Tyr-295 each bind substrate.

This sequence belongs to the NAD(P)-dependent epimerase/dehydratase family. HldD subfamily. Homopentamer. Requires NADP(+) as cofactor.

It carries out the reaction ADP-D-glycero-beta-D-manno-heptose = ADP-L-glycero-beta-D-manno-heptose. Its pathway is nucleotide-sugar biosynthesis; ADP-L-glycero-beta-D-manno-heptose biosynthesis; ADP-L-glycero-beta-D-manno-heptose from D-glycero-beta-D-manno-heptose 7-phosphate: step 4/4. In terms of biological role, catalyzes the interconversion between ADP-D-glycero-beta-D-manno-heptose and ADP-L-glycero-beta-D-manno-heptose via an epimerization at carbon 6 of the heptose. The protein is ADP-L-glycero-D-manno-heptose-6-epimerase of Thiobacillus denitrificans (strain ATCC 25259 / T1).